The sequence spans 840 residues: Leucine--tRNA ligase (840 aa).

Positions P44–H55 match the 'HIGH' region motif. A 'KMSKS' region motif is present at residues K617–S621. Residue K620 coordinates ATP.

This sequence belongs to the class-I aminoacyl-tRNA synthetase family.

It localises to the cytoplasm. It carries out the reaction tRNA(Leu) + L-leucine + ATP = L-leucyl-tRNA(Leu) + AMP + diphosphate. This chain is Leucine--tRNA ligase, found in Borrelia garinii subsp. bavariensis (strain ATCC BAA-2496 / DSM 23469 / PBi) (Borreliella bavariensis).